We begin with the raw amino-acid sequence, 355 residues long: UDP-N-acetylglucosamine--N-acetylmuramyl-(pentapeptide) pyrophosphoryl-undecaprenol N-acetylglucosamine transferase (355 aa).

UDP-N-acetyl-alpha-D-glucosamine contacts are provided by residues 15 to 17 (TGG), Asn-127, Arg-163, Ser-191, Ile-244, 263 to 268 (ALTVSE), and Gln-288.

This sequence belongs to the glycosyltransferase 28 family. MurG subfamily.

The protein resides in the cell inner membrane. The enzyme catalyses di-trans,octa-cis-undecaprenyl diphospho-N-acetyl-alpha-D-muramoyl-L-alanyl-D-glutamyl-meso-2,6-diaminopimeloyl-D-alanyl-D-alanine + UDP-N-acetyl-alpha-D-glucosamine = di-trans,octa-cis-undecaprenyl diphospho-[N-acetyl-alpha-D-glucosaminyl-(1-&gt;4)]-N-acetyl-alpha-D-muramoyl-L-alanyl-D-glutamyl-meso-2,6-diaminopimeloyl-D-alanyl-D-alanine + UDP + H(+). Its pathway is cell wall biogenesis; peptidoglycan biosynthesis. Its function is as follows. Cell wall formation. Catalyzes the transfer of a GlcNAc subunit on undecaprenyl-pyrophosphoryl-MurNAc-pentapeptide (lipid intermediate I) to form undecaprenyl-pyrophosphoryl-MurNAc-(pentapeptide)GlcNAc (lipid intermediate II). The sequence is that of UDP-N-acetylglucosamine--N-acetylmuramyl-(pentapeptide) pyrophosphoryl-undecaprenol N-acetylglucosamine transferase from Salmonella paratyphi A (strain ATCC 9150 / SARB42).